The following is a 206-amino-acid chain: MGRFRGSITKLSRREGINLAETEKVQKYLDKRPYAPGQHGQRRGRGRPSDYSVRLREKQKLARLYGMGEKQFRNLFEEAASVPGVTGTVFLQLLERRLDNVVFRMGFASTRRQARQFVGHGHILVNGKKVDIPSYRVKIGDEISVFEGSRQMGFVQENMEAQKRRRVSPWVELDVENFKGTFSRLPAREDLALPINENFIIEYYSR.

The interval 29-52 (LDKRPYAPGQHGQRRGRGRPSDYS) is disordered. An S4 RNA-binding domain is found at 96–171 (RRLDNVVFRM…QKRRRVSPWV (76 aa)).

It belongs to the universal ribosomal protein uS4 family. As to quaternary structure, part of the 30S ribosomal subunit. Contacts protein S5. The interaction surface between S4 and S5 is involved in control of translational fidelity.

Its function is as follows. One of the primary rRNA binding proteins, it binds directly to 16S rRNA where it nucleates assembly of the body of the 30S subunit. With S5 and S12 plays an important role in translational accuracy. The polypeptide is Small ribosomal subunit protein uS4 (Deinococcus deserti (strain DSM 17065 / CIP 109153 / LMG 22923 / VCD115)).